A 197-amino-acid polypeptide reads, in one-letter code: Putative glutathione-dependent formaldehyde-activating enzyme (197 aa).

Residues 22–171 form the CENP-V/GFA domain; that stretch reads FPGGKLYCHC…LKSLGLENYD (150 aa). 7 residues coordinate Zn(2+): Cys29, Cys31, Cys50, Cys52, Cys55, Cys97, and Cys100.

This sequence belongs to the Gfa family. The cofactor is Zn(2+).

It carries out the reaction S-(hydroxymethyl)glutathione = glutathione + formaldehyde. It functions in the pathway one-carbon metabolism; formaldehyde degradation; formate from formaldehyde (glutathione route): step 1/3. Catalyzes the condensation of formaldehyde and glutathione to S-hydroxymethylglutathione. This is Putative glutathione-dependent formaldehyde-activating enzyme from Emericella nidulans (strain FGSC A4 / ATCC 38163 / CBS 112.46 / NRRL 194 / M139) (Aspergillus nidulans).